Consider the following 329-residue polypeptide: Beta-ribofuranosylphenol 5'-phosphate synthase (329 aa).

This sequence belongs to the beta-RFA-P synthase family. Homodimer. Mg(2+) is required as a cofactor.

The catalysed reaction is 5-phospho-alpha-D-ribose 1-diphosphate + 4-hydroxybenzoate + H(+) = 4-(beta-D-ribofuranosyl)phenol 5'-phosphate + CO2 + diphosphate. The enzyme catalyses 4-aminobenzoate + 5-phospho-alpha-D-ribose 1-diphosphate + H(+) = 4-(beta-D-ribofuranosyl)aminobenzene 5'-phosphate + CO2 + diphosphate. Its pathway is cofactor biosynthesis; 5,6,7,8-tetrahydromethanopterin biosynthesis. In terms of biological role, catalyzes the condensation of 4-hydroxybenzoate (HB) with 5-phospho-alpha-D-ribose 1-diphosphate (PRPP) to produce beta-ribofuranosylphenol 5'-phosphate (beta-RFH-P). Also catalyzes the condensation of 4-aminobenzoate (pABA) with PRPP to produce beta-ribofuranosylaminobenzene 5'-phosphate (beta-RFA-P). Only 4-hydroxybenzoate is known to be biosynthesized by methanogenic archaea, but 4-aminobenzoate can be used as substrate by growing methanogens when it is present in the growth medium. The protein is Beta-ribofuranosylphenol 5'-phosphate synthase of Methanothermobacter thermautotrophicus (strain ATCC 29096 / DSM 1053 / JCM 10044 / NBRC 100330 / Delta H) (Methanobacterium thermoautotrophicum).